Here is a 204-residue protein sequence, read N- to C-terminus: Proteasome subunit beta type-3 (204 aa).

It belongs to the peptidase T1B family. The 26S proteasome consists of a 20S proteasome core and two 19S regulatory subunits. The 20S proteasome core is composed of 28 subunits that are arranged in four stacked rings, resulting in a barrel-shaped structure. The two end rings are each formed by seven alpha subunits, and the two central rings are each formed by seven beta subunits. The catalytic chamber with the active sites is on the inside of the barrel.

It is found in the cytoplasm. Its subcellular location is the nucleus. In terms of biological role, non-catalytic component of the proteasome, a multicatalytic proteinase complex which is characterized by its ability to cleave peptides with Arg, Phe, Tyr, Leu, and Glu adjacent to the leaving group at neutral or slightly basic pH. The proteasome has an ATP-dependent proteolytic activity. This is Proteasome subunit beta type-3 (PBC1) from Picea mariana (Black spruce).